We begin with the raw amino-acid sequence, 616 residues long: Glycogenin-1 (616 aa).

UDP-binding residues include L10, Y16, and R95. Positions 10, 16, 95, 104, 120, 122, 158, 159, 185, 188, and 189 each coordinate UDP-alpha-D-glucose. D120 and D122 together coordinate UDP. 2 residues coordinate Mn(2+): D120 and D122. Y230 is a glycosylation site (O-linked (Glc...) tyrosine). The UDP site is built by H247, G250, and K253. H247 provides a ligand contact to Mn(2+). Positions 250 and 253 each coordinate UDP-alpha-D-glucose. The span at 283–302 (HQLNNEVSKPKISDSDKTET) shows a compositional bias: basic and acidic residues. Disordered stretches follow at residues 283-320 (HQLN…PTTN), 335-354 (NQNA…NPVP), and 371-516 (TNQP…SVDD). Basic and acidic residues predominate over residues 377-386 (ESREYSKEND). Residues 400–419 (SPPNSTQEPNSSYSVVSTQA) are compositionally biased toward polar residues. The segment covering 450–461 (STAASSNNNVSN) has biased composition (low complexity). Composition is skewed to polar residues over residues 462 to 485 (QPDN…PSNP) and 492 to 503 (DNIQKPSVSTND). The O-linked (Glc...) tyrosine glycan is linked to Y598.

This sequence belongs to the glycosyltransferase 8 family. Glycogenin subfamily. Mn(2+) serves as cofactor.

It localises to the cytoplasm. The protein resides in the vacuole. The enzyme catalyses L-tyrosyl-[glycogenin] + UDP-alpha-D-glucose = alpha-D-glucosyl-L-tyrosyl-[glycogenin] + UDP + H(+). It catalyses the reaction [1,4-alpha-D-glucosyl](n)-L-tyrosyl-[glycogenin] + UDP-alpha-D-glucose = [1,4-alpha-D-glucosyl](n+1)-L-tyrosyl-[glycogenin] + UDP + H(+). In terms of biological role, self-glucosylating initiator of glycogen synthesis. It catalyzes the formation of a short alpha (1,4)-glucosyl chain covalently attached via a glucose 1-O-tyrosyl linkage to internal tyrosine residues and these chains act as primers for the elongation reaction catalyzed by glycogen synthase. Capable of transferring glucosyl residues to unbound acceptors such as free oligoglucans or oligoglucan derivatives. In Saccharomyces cerevisiae (strain YJM789) (Baker's yeast), this protein is Glycogenin-1 (GLG1).